Consider the following 317-residue polypeptide: Melanocyte-stimulating hormone receptor (317 aa).

The Extracellular segment spans residues 1–37 (MPVQGSQRRLLGSLNSTPTATPHLGLAANQTGARCLE). N-linked (GlcNAc...) asparagine glycosylation is present at Asn29. Residues 38–63 (VSIPDGLFLSLGLVSLVENVLVVTAI) traverse the membrane as a helical segment. Residues 64 to 72 (AKNRNLHSP) are Cytoplasmic-facing. The helical transmembrane segment at 73–93 (MYCFICCLALSDLLVSGSNML) threads the bilayer. At 94–118 (ETAVTLLLEAGALAARAAVVQQLDN) the chain is on the extracellular side. Residues 119–140 (VIDVITCSSMLSSLCFLGAIAV) traverse the membrane as a helical segment. At 141–163 (DRYISIFYALRYHSIVTLPRARR) the chain is on the cytoplasmic side. The chain crosses the membrane as a helical span at residues 164–183 (AVAAIWVASVLFSMLFIAYY). The Extracellular portion of the chain corresponds to 184–191 (DHAAVLLC). The chain crosses the membrane as a helical span at residues 192-211 (LVVFFLAMLVLMAVLYVHML). Residues 212-240 (ARACQHAQGIARLHKRQRPAHQGFGLKGA) lie on the Cytoplasmic side of the membrane. Residues 241–266 (ATLTILLGIFFLCWGPFFLHLTLIVL) traverse the membrane as a helical segment. The Extracellular segment spans residues 267 to 279 (CPQHPTCSCIFKN). A helical membrane pass occupies residues 280–300 (FNLFLALIICNAIIDPLIYAF). Residues 301–317 (RSQELRRTLKEVLLCSW) lie on the Cytoplasmic side of the membrane. Cys315 carries the S-palmitoyl cysteine lipid modification.

The protein belongs to the G-protein coupled receptor 1 family. In terms of assembly, interacts with MGRN1, but does not undergo MGRN1-mediated ubiquitination; this interaction competes with GNAS-binding and thus inhibits agonist-induced cAMP production. Interacts with OPN3; the interaction results in a decrease in MC1R-mediated cAMP signaling and ultimately a decrease in melanin production in melanocytes.

Its subcellular location is the cell membrane. Functionally, receptor for MSH (alpha, beta and gamma) and ACTH. The activity of this receptor is mediated by G proteins which activate adenylate cyclase. Mediates melanogenesis, the production of eumelanin (black/brown) and phaeomelanin (red/yellow), via regulation of cAMP signaling in melanocytes. In Miopithecus talapoin (Angolan talapoin), this protein is Melanocyte-stimulating hormone receptor (MC1R).